Consider the following 198-residue polypeptide: Peptidyl-tRNA hydrolase (198 aa).

TRNA is bound at residue Tyr16. His21 (proton acceptor) is an active-site residue. 3 residues coordinate tRNA: Tyr67, Asn69, and Asn115.

Belongs to the PTH family. In terms of assembly, monomer.

Its subcellular location is the cytoplasm. The catalysed reaction is an N-acyl-L-alpha-aminoacyl-tRNA + H2O = an N-acyl-L-amino acid + a tRNA + H(+). In terms of biological role, hydrolyzes ribosome-free peptidyl-tRNAs (with 1 or more amino acids incorporated), which drop off the ribosome during protein synthesis, or as a result of ribosome stalling. Its function is as follows. Catalyzes the release of premature peptidyl moieties from peptidyl-tRNA molecules trapped in stalled 50S ribosomal subunits, and thus maintains levels of free tRNAs and 50S ribosomes. The protein is Peptidyl-tRNA hydrolase of Gloeobacter violaceus (strain ATCC 29082 / PCC 7421).